The sequence spans 529 residues: MAELTIRPEEIRDALENFVQSYKPDAASREEVGTVTVAGDGIAKVEGLPSAMANELLKFEDGTLGLALNLEEREIGAVVLGEFSGIEEGQPVHRTGEVLSVAVGEGYLGRVVDPLGNPIDGLGEIETSGRRALELQAPTVMDRKSVHEPMETGYKAVDAMTPIGRGQRQLIIGDRQTGKTALAVDTIINQRDNWRTGDPKKQVRCIYVAIGQKGSTIASVRGALEEAGALEYTTIVAAPASDPAGFKYLAPYTGSAIGQQWMYEGKHVLIIFDDLSKQADAYRAVSLLLRRPPGREAYPGDVFYLHSRLLERCAKLSDDMGAGSMTGLPIVETKANDVSAFIPTNVISITDGQCFLESDLFNAGQRPALNVGISVSRVGGSAQHKAMRQVSGRLRVDLAQFRELEAFAAFGSDLDAASKSQLERGQRMVELLKQAQYQPMPTEDQVVSVWAGTTGKMDDVPVADIRRFEKELLEFLHRKYQGLMTSIKEGAKMSDDTLTAIADAIADFKKQFETSDGKLLGEDVPAAGK.

173–180 (GDRQTGKT) serves as a coordination point for ATP.

The protein belongs to the ATPase alpha/beta chains family. In terms of assembly, F-type ATPases have 2 components, CF(1) - the catalytic core - and CF(0) - the membrane proton channel. CF(1) has five subunits: alpha(3), beta(3), gamma(1), delta(1), epsilon(1). CF(0) has three main subunits: a(1), b(2) and c(9-12). The alpha and beta chains form an alternating ring which encloses part of the gamma chain. CF(1) is attached to CF(0) by a central stalk formed by the gamma and epsilon chains, while a peripheral stalk is formed by the delta and b chains.

The protein localises to the cell membrane. The enzyme catalyses ATP + H2O + 4 H(+)(in) = ADP + phosphate + 5 H(+)(out). Its function is as follows. Produces ATP from ADP in the presence of a proton gradient across the membrane. The alpha chain is a regulatory subunit. The protein is ATP synthase subunit alpha of Streptomyces avermitilis (strain ATCC 31267 / DSM 46492 / JCM 5070 / NBRC 14893 / NCIMB 12804 / NRRL 8165 / MA-4680).